The sequence spans 150 residues: UPF0178 protein Bcep1808_1605 (150 aa).

Belongs to the UPF0178 family.

The chain is UPF0178 protein Bcep1808_1605 from Burkholderia vietnamiensis (strain G4 / LMG 22486) (Burkholderia cepacia (strain R1808)).